We begin with the raw amino-acid sequence, 148 residues long: Lysozyme C (148 aa).

The first 18 residues, 1-18, serve as a signal peptide directing secretion; that stretch reads MKAVIILGLVLLSVTVQG. One can recognise a C-type lysozyme domain in the interval 19-148; sequence KIFERCELAR…VSQYVQGCGV (130 aa). 4 cysteine pairs are disulfide-bonded: cysteine 24–cysteine 146, cysteine 48–cysteine 134, cysteine 83–cysteine 99, and cysteine 95–cysteine 113. Catalysis depends on residues glutamate 53 and aspartate 71.

This sequence belongs to the glycosyl hydrolase 22 family. As to quaternary structure, monomer.

It is found in the secreted. It carries out the reaction Hydrolysis of (1-&gt;4)-beta-linkages between N-acetylmuramic acid and N-acetyl-D-glucosamine residues in a peptidoglycan and between N-acetyl-D-glucosamine residues in chitodextrins.. Lysozymes have primarily a bacteriolytic function; those in tissues and body fluids are associated with the monocyte-macrophage system and enhance the activity of immunoagents. This chain is Lysozyme C (LYZ), found in Miopithecus talapoin (Angolan talapoin).